The following is a 440-amino-acid chain: Rhamnogalacturonase A (440 aa).

An N-terminal signal peptide occupies residues 1-18; it reads MRALFLLALGSIPALVSG. Cys39 and Cys65 are disulfide-bonded. Residue Asn50 is glycosylated (N-linked (GlcNAc...) asparagine). The active-site Proton donor is Asp215. Residues Cys217 and Cys234 are joined by a disulfide bond. The active site involves His290. Residue Asn317 is glycosylated (N-linked (GlcNAc...) asparagine). Cystine bridges form between Cys340–Cys346 and Cys368–Cys377. Thr385 is a glycosylation site (O-linked (Man) threonine). The O-linked (Man) serine glycan is linked to Ser386. Residues Thr388, Thr389, and Thr390 are each glycosylated (O-linked (Man) threonine). O-linked (Man) serine glycosylation occurs at Ser391. Residues Thr392 and Thr394 are each glycosylated (O-linked (Man) threonine). Residues Ser398 and Ser401 are each glycosylated (O-linked (Man) serine). O-linked (Man) threonine glycans are attached at residues Thr403, Thr404, and Thr416. Ser418 carries O-linked (Man) serine glycosylation. Residues Thr423 and Thr426 are each glycosylated (O-linked (Man) threonine). Residues Ser427 and Ser436 are each glycosylated (O-linked (Man) serine).

This sequence belongs to the glycosyl hydrolase 28 family. Post-translationally, the N-terminus is blocked. In terms of processing, N-glycosylated and may also be O-glycosylated.

It localises to the secreted. The catalysed reaction is Endohydrolysis of alpha-D-GalA-(1-&gt;2)-alpha-L-Rha glycosidic bond in the rhamnogalacturonan I backbone with initial inversion of anomeric configuration releasing oligosaccharides with beta-D-GalA at the reducing end.. Pectinolytic enzymes consist of four classes of enzymes: pectine lyase, polygalacturonase, pectin methylesterase and rhamnogalacturonase. Has a positive effect in the apple hot-mash liquefaction process. Hydrolyzes alpha-D-galacturonopyranosyl-(1,2)-alpha-L-rhamnopyranosyl linkages in the backbone of the hairy regions of pectins. In Aspergillus aculeatus, this protein is Rhamnogalacturonase A (rhgA).